The following is a 616-amino-acid chain: Glycoprotein Q1 (616 aa).

The signal sequence occupies residues 1-24; that stretch reads MRPPRRSAPILVCAISMATALSNA. Asn-23, Asn-44, Asn-282, Asn-330, and Asn-351 each carry an N-linked (GlcNAc...) asparagine; by host glycan.

In terms of assembly, interacts with isoform gQ2. The heterodimer gQ1-gQ2 associates with the glycoprotein complex gH-gL to form a tetrameric complex. The gH/gL/gQ1/gQ2 complex binds to host TNFRSF4. Post-translationally, glycosylated by host.

It is found in the virion. It localises to the host endoplasmic reticulum lumen. Functionally, plays a role in virus entry by participating in host receptor binding at the cell surface. This is Glycoprotein Q1 from Homo sapiens (Human).